The following is a 461-amino-acid chain: Phosphoglucosamine mutase (461 aa).

Ser107 serves as the catalytic Phosphoserine intermediate. 4 residues coordinate Mg(2+): Ser107, Asp254, Asp256, and Asp258. Position 107 is a phosphoserine (Ser107).

It belongs to the phosphohexose mutase family. The cofactor is Mg(2+). Activated by phosphorylation.

The catalysed reaction is alpha-D-glucosamine 1-phosphate = D-glucosamine 6-phosphate. In terms of biological role, catalyzes the conversion of glucosamine-6-phosphate to glucosamine-1-phosphate. This is Phosphoglucosamine mutase from Bifidobacterium longum subsp. infantis (strain ATCC 15697 / DSM 20088 / JCM 1222 / NCTC 11817 / S12).